A 304-amino-acid chain; its full sequence is MTYWNQRTVAKRVSCTGVGLHSGKPATLTLAPAPADSGITFVRMDLDVEVPARNDLVVDTMLSTSVALGAARVSTVEHVLAALAGMGIDNCRVEVDGPEIPIVDGSAAPFVCLIQEAGTRQQRAGRRYLVVDQPVEIRDGDKLARLDPADGFVVDFTADFDHPLVTNQSFRVALSDRAFEREVARARTFCFRRDIERMQAAGLAKGGSLDNAIVIDEFSILNPEGLRFPDEFARHKVLDAIGDLALLGMPVLGALTAVKSGHALNQALVRKVLADPGCHRVVRLTSDADVPARRPVALGLPEAI.

Zn(2+)-binding residues include His78, His235, and Asp239. The Proton donor role is filled by His262.

The protein belongs to the LpxC family. Zn(2+) is required as a cofactor.

It catalyses the reaction a UDP-3-O-[(3R)-3-hydroxyacyl]-N-acetyl-alpha-D-glucosamine + H2O = a UDP-3-O-[(3R)-3-hydroxyacyl]-alpha-D-glucosamine + acetate. The protein operates within glycolipid biosynthesis; lipid IV(A) biosynthesis; lipid IV(A) from (3R)-3-hydroxytetradecanoyl-[acyl-carrier-protein] and UDP-N-acetyl-alpha-D-glucosamine: step 2/6. Its function is as follows. Catalyzes the hydrolysis of UDP-3-O-myristoyl-N-acetylglucosamine to form UDP-3-O-myristoylglucosamine and acetate, the committed step in lipid A biosynthesis. In Anaeromyxobacter sp. (strain Fw109-5), this protein is UDP-3-O-acyl-N-acetylglucosamine deacetylase.